The following is a 366-amino-acid chain: GTPase Obg (366 aa).

In terms of domain architecture, Obg spans 1-162; it reads MRFVDEAVIK…KSLRLELKIL (162 aa). The segment at 125–150 is disordered; sequence RGGKGNEHFKSSTMQAPRFSQPGEPG. The OBG-type G domain occupies 163-335; sequence ADAGLLGLPN…VVSEMWRMLA (173 aa). Residues 169 to 176, 194 to 198, 218 to 221, 288 to 291, and 316 to 318 contribute to the GTP site; these read GLPNAGKS, FTTLV, DIPG, NKID, and SAL. Residues Ser176 and Thr196 each coordinate Mg(2+).

The protein belongs to the TRAFAC class OBG-HflX-like GTPase superfamily. OBG GTPase family. Monomer. The cofactor is Mg(2+).

It is found in the cytoplasm. An essential GTPase which binds GTP, GDP and possibly (p)ppGpp with moderate affinity, with high nucleotide exchange rates and a fairly low GTP hydrolysis rate. Plays a role in control of the cell cycle, stress response, ribosome biogenesis and in those bacteria that undergo differentiation, in morphogenesis control. The sequence is that of GTPase Obg from Oleidesulfovibrio alaskensis (strain ATCC BAA-1058 / DSM 17464 / G20) (Desulfovibrio alaskensis).